A 52-amino-acid polypeptide reads, in one-letter code: Unknown protein from spot 415 of 2D-PAGE of etiolated coleoptile (52 aa).

The sequence is that of Unknown protein from spot 415 of 2D-PAGE of etiolated coleoptile from Zea mays (Maize).